We begin with the raw amino-acid sequence, 463 residues long: L-seryl-tRNA(Sec) selenium transferase (463 aa).

At Lys295 the chain carries N6-(pyridoxal phosphate)lysine.

Belongs to the SelA family. Homodecamer; pentamer of dimers. Binds only one seryl-tRNA(Sec) per dimer. Requires pyridoxal 5'-phosphate as cofactor.

It localises to the cytoplasm. It carries out the reaction L-seryl-tRNA(Sec) + selenophosphate + H(+) = L-selenocysteinyl-tRNA(Sec) + phosphate. It functions in the pathway aminoacyl-tRNA biosynthesis; selenocysteinyl-tRNA(Sec) biosynthesis; selenocysteinyl-tRNA(Sec) from L-seryl-tRNA(Sec) (bacterial route): step 1/1. In terms of biological role, converts seryl-tRNA(Sec) to selenocysteinyl-tRNA(Sec) required for selenoprotein biosynthesis. This is L-seryl-tRNA(Sec) selenium transferase from Serratia proteamaculans (strain 568).